We begin with the raw amino-acid sequence, 1020 residues long: MEDMKPSTASTKNLHHDGVGENDTIEVRFTDFCKIGLSVSEDAYEEAIKLFKGTKHLLLANISAIGNGMPEEAERFWFAFVSYSVKRLSEKIRDNMQQRPDDNGLTLCQILRRAKLNIVDFFKELPQYVVKAGPILSTMYGVDWENRLEAKELQANFVHLSILSRHYKRAYRELFLTSDANVDKQSATAYMSDYHRFGWLLFLALRVHAFSRFKDLVTCTNGLVSVLAILIIHVPVRFRNFNLNDSQRFVKKGDKGVDLLASLCNKYDTSEDELRKTMEKTNNLIADILKKKPHMASEYKNENLDNINTDGLIYYEDLMEESSLRSSLDILEKDYEDAIRCKGELDERVFINEEDSLLGSGSLSGGAISVTGTKRKFDQISSPTKTITSPLSPHRSPASHTNGILGSTNSRMAATPVSTAMTTAKWLRTVISPLPSKPSPQLERFLASCDRDVTNDVIRRAHIILEAIFPSNALGERCVTGSLQSTNLMDNIWAEQRRLEALKLYYRVLEAMCTAEAQILHATNLTSLLTNERFHRCMLACSAELVLATHKTVTMLFPAVLERTGITAFDLSKVIESFIRHEESLPRELRRHLNSLEERLLESMVWEKGSSMYNSLTVARPSLSAEINRLGLLAEPMPSLDAIAVHINFSSGGLPPLSSVSKHEISPGQNGDIRSPKRPCTDYRSVLVERNSFTSPVKDRLLAFTNLKSKLPPPPLQSAFASPTRPNPGGGGETCAETGINIFFSKINKLAAVRINGMVERLQQSQQHIRENVYRLFQQVLSQQTSLFFNRHIDQIILCCFYGVAKISKVNLTFREIIYNYRKQPQCKPQVFRSVFVDWSSARHNGRTGQDHVDIITFYNEIFIPAAKPLLVEVGSAGITVKGSQVPEVNNNKDGQCPASPKVSPFPSLPDMSPKKVSAAHNVYVSPLRTSKMDALISHSSKSYYACVGESTHAYQSPSKDLTAINNRLNGNRNIRGSLNFDDVDVGLVSDSMVAKSLYLQNGSCASTSGAPLKTEQPDP.

2 stretches are compositionally biased toward polar residues: residues 382–391 (SPTKTITSPL) and 398–409 (ASHTNGILGSTN). The segment at 382–409 (SPTKTITSPLSPHRSPASHTNGILGSTN) is disordered. The domain A stretch occupies residues 415–616 (TPVSTAMTTA…EKGSSMYNSL (202 aa)). The segment at 415 to 869 (TPVSTAMTTA…NEIFIPAAKP (455 aa)) is pocket. A spacer region spans residues 617 to 737 (TVARPSLSAE…PGGGGETCAE (121 aa)). The domain B stretch occupies residues 738–869 (TGINIFFSKI…NEIFIPAAKP (132 aa)).

The protein belongs to the retinoblastoma protein (RB) family.

The protein resides in the nucleus. In terms of biological role, regulator of biological processes that recruits a histone deacetylase to control gene transcription. May play a role in the entry into mitosis, negatively regulating the cell proliferation. Formation of stable complexes with geminiviridae replication-associated proteins may create a cellular environment which favors viral DNA replication. The polypeptide is Retinoblastoma-related protein (RBR) (Ricinus communis (Castor bean)).